Here is a 1397-residue protein sequence, read N- to C-terminus: Centlein (1397 aa).

Disordered regions lie at residues 1-43 (MAAR…GLAG) and 56-76 (LWRGEEGSGGRRGSGRAGAAV). Ala-2 carries the N-acetylalanine modification. Residues Ser-5, Ser-9, and Ser-22 each carry the phosphoserine modification. Coiled coils occupy residues 95–126 (EEAKATRSQLLEEELSSLKEELALCQADKEFV) and 405–481 (VVNL…KLMA). Disordered regions lie at residues 422–449 (LKEKLEESQGTAPSLSPHDSDSSHSGKA) and 485–521 (CDQDFSEKGTEGKHKEPPVKRSRSLSPKSSFMGSEEL). Residues 485–503 (CDQDFSEKGTEGKHKEPPV) are compositionally biased toward basic and acidic residues. Coiled-coil stretches lie at residues 674-778 (KNEK…KALR), 973-1114 (ISLR…MELL), and 1152-1299 (SESN…LKKM). Ser-1219 bears the Phosphoserine mark. Phosphothreonine is present on Thr-1334.

In terms of assembly, interacts with CEP250 and CEP68. Interacts with NEK2; the interaction leads to phosphorylation of CNTLN. Post-translationally, phosphorylated directly or indirectly by NEK2.

It localises to the cytoplasm. The protein resides in the cytoskeleton. It is found in the microtubule organizing center. The protein localises to the centrosome. Its subcellular location is the centriole. Required for centrosome cohesion and recruitment of CEP68 to centrosomes. In Mus musculus (Mouse), this protein is Centlein.